The chain runs to 134 residues: UPF0715 membrane protein YoaG (134 aa).

Transmembrane regions (helical) follow at residues 9–29 (LMTLGLSSLTFGLLLGFYSFV), 35–55 (IIALFTAAIALLYGFVVYGLF), 72–92 (VMYLLIYSVVAFIAAFLFFVI), and 106–126 (FYYMLSIAAAVIYWLWDSLIL).

This sequence belongs to the UPF0715 family.

It localises to the cell membrane. The chain is UPF0715 membrane protein YoaG (yoaG) from Bacillus subtilis (strain 168).